Reading from the N-terminus, the 462-residue chain is 3-isopropylmalate dehydratase large subunit (462 aa).

3 residues coordinate [4Fe-4S] cluster: cysteine 337, cysteine 397, and cysteine 400.

This sequence belongs to the aconitase/IPM isomerase family. LeuC type 1 subfamily. In terms of assembly, heterodimer of LeuC and LeuD. [4Fe-4S] cluster is required as a cofactor.

It carries out the reaction (2R,3S)-3-isopropylmalate = (2S)-2-isopropylmalate. It functions in the pathway amino-acid biosynthesis; L-leucine biosynthesis; L-leucine from 3-methyl-2-oxobutanoate: step 2/4. Catalyzes the isomerization between 2-isopropylmalate and 3-isopropylmalate, via the formation of 2-isopropylmaleate. The polypeptide is 3-isopropylmalate dehydratase large subunit (Listeria monocytogenes serovar 1/2a (strain ATCC BAA-679 / EGD-e)).